The sequence spans 200 residues: Dipicolinate synthase subunit B (200 aa).

Dipicolinate synthase likely consists of DpaA and DpaB, since both proteins are required for DPA synthesis.

The enzyme catalyses (S)-2,3-dihydrodipicolinate + NADP(+) = dipicolinate + NADPH + H(+). In terms of biological role, together with DpaA, catalyzes the conversion of dihydrodipicolinate to dipicolinate (DPA), which constitutes up to 10% of the dry weight of the spore. The polypeptide is Dipicolinate synthase subunit B (dpaB) (Bacillus subtilis (strain 168)).